A 435-amino-acid polypeptide reads, in one-letter code: Mitochondrial association factor 1 form b0 (435 aa).

The N-terminal stretch at 1–27 (MWRIWRCRLSFLFVTGCLLGALTAGLG) is a signal peptide. Over 28–96 (SQMSDSVGRN…VTARRRRNRR (69 aa)) the chain is Vacuolar. Residues 43 to 89 (GVADASQEAGDVVEERTERTEEQVFAPGPPRRHSSESLFPRNPSVTA) are disordered. Residues 55–64 (VEERTERTEE) show a composition bias toward basic and acidic residues. Residues 97–117 (ITLIATAVGVAVILAALYVLR) form a helical membrane-spanning segment. Topologically, residues 118–435 (RRRAQPPQEP…ESTYLASMLD (318 aa)) are cytoplasmic. The interval 120-162 (RAQPPQEPEPPTRLRTPRPRAPSGQQQPSESEPPAGVPMKPGS) is disordered.

The protein localises to the parasitophorous vacuole membrane. During host cell infection by tachyzoites, does not play a role in tethering the parasitophorous vacuole to the host mitochondria. This is Mitochondrial association factor 1 form b0 from Toxoplasma gondii.